The chain runs to 392 residues: 4-hydroxybenzoate polyprenyltransferase, mitochondrial (392 aa).

A mitochondrion-targeting transit peptide spans 1-22; sequence MYALRHLRLQSARHFRSSYAAA. The next 9 membrane-spanning stretches (helical) occupy residues 90-110, 115-135, 163-183, 184-204, 207-227, 236-256, 283-303, 307-327, and 339-359; these read IGTY…ADAG, LTML…GCTI, FDAI…LVQL, NWQS…YPLM, VTYW…LLGW, LAAC…YDTI, VWLS…GWAC, VPYY…IYSL, and FISN…GTLL. The tract at residues 365–392 is disordered; that stretch reads KKQRQSSLTTSTASSYVPALPQKPEVLS. Residues 369 to 379 are compositionally biased toward polar residues; the sequence is QSSLTTSTASS.

The protein belongs to the UbiA prenyltransferase family. Requires Mg(2+) as cofactor.

It localises to the mitochondrion inner membrane. It carries out the reaction an all-trans-polyprenyl diphosphate + 4-hydroxybenzoate = a 4-hydroxy-3-(all-trans-polyprenyl)benzoate + diphosphate. It functions in the pathway cofactor biosynthesis; ubiquinone biosynthesis. Functionally, catalyzes the prenylation of para-hydroxybenzoate (PHB) with an all-trans polyprenyl group. Mediates the second step in the final reaction sequence of coenzyme Q (CoQ) biosynthesis, which is the condensation of the polyisoprenoid side chain with PHB, generating the first membrane-bound Q intermediate. In Drosophila melanogaster (Fruit fly), this protein is 4-hydroxybenzoate polyprenyltransferase, mitochondrial.